Consider the following 185-residue polypeptide: Threonylcarbamoyl-AMP synthase (185 aa).

Residues S4–S185 enclose the YrdC-like domain.

The protein belongs to the SUA5 family. TsaC subfamily.

It is found in the cytoplasm. It carries out the reaction L-threonine + hydrogencarbonate + ATP = L-threonylcarbamoyladenylate + diphosphate + H2O. Functionally, required for the formation of a threonylcarbamoyl group on adenosine at position 37 (t(6)A37) in tRNAs that read codons beginning with adenine. Catalyzes the conversion of L-threonine, HCO(3)(-)/CO(2) and ATP to give threonylcarbamoyl-AMP (TC-AMP) as the acyladenylate intermediate, with the release of diphosphate. The chain is Threonylcarbamoyl-AMP synthase from Pseudomonas fluorescens (strain ATCC BAA-477 / NRRL B-23932 / Pf-5).